Reading from the N-terminus, the 124-residue chain is Large ribosomal subunit protein bL12 (124 aa).

Belongs to the bacterial ribosomal protein bL12 family. In terms of assembly, homodimer. Part of the ribosomal stalk of the 50S ribosomal subunit. Forms a multimeric L10(L12)X complex, where L10 forms an elongated spine to which 2 to 4 L12 dimers bind in a sequential fashion. Binds GTP-bound translation factors.

Forms part of the ribosomal stalk which helps the ribosome interact with GTP-bound translation factors. Is thus essential for accurate translation. The protein is Large ribosomal subunit protein bL12 of Hamiltonella defensa subsp. Acyrthosiphon pisum (strain 5AT).